Reading from the N-terminus, the 229-residue chain is MAAKPVLYYFNGRGKMESIRWLLAAAGVEFEEVFLETREQYEKLLQSGILMFQQVPMVEIDGMKLVQTRAILNYIAGKYNLYGKDLKERALIDMYVGGTDDLMGFLLSFPFLSAEDKVKQCAFVVEKATSRYFPAYEKVLKDHGQDFLVGNRLSWADIHLLEAILMVEEKKSDALSGFPLLQAFKKRISSIPTIKKFLAPGSKRKPISDDKYVETVRRVLRMYYDVKPH.

A2 carries the post-translational modification Blocked amino end (Ala). A GST N-terminal domain is found at 3–83 (AKPVLYYFNG…YIAGKYNLYG (81 aa)). Glutathione is bound by residues Y9, 54 to 55 (QV), and 67 to 68 (QT). In terms of domain architecture, GST C-terminal spans 85–207 (DLKERALIDM…LAPGSKRKPI (123 aa)).

This sequence belongs to the GST superfamily. Alpha family. In terms of assembly, homodimer or heterodimer (with a subunit from group CL-4).

The protein resides in the cytoplasm. The catalysed reaction is RX + glutathione = an S-substituted glutathione + a halide anion + H(+). In terms of biological role, catalyzes the conjugation of GSH to a wide variety of electrophilic alkylating agents. Also involved in the metabolism of lipid hydroperoxides, prostaglandins and leukotriene A4 and in binding of non-substrate hydrophobic ligands such as bile acids, a number of drugs and thyroid hormones. This GST does not exhibit peroxidase activity. The chain is Glutathione S-transferase 3 from Gallus gallus (Chicken).